The chain runs to 361 residues: Peptide chain release factor 1 (361 aa).

The residue at position 235 (Q235) is an N5-methylglutamine.

This sequence belongs to the prokaryotic/mitochondrial release factor family. Methylated by PrmC. Methylation increases the termination efficiency of RF1.

Its subcellular location is the cytoplasm. Peptide chain release factor 1 directs the termination of translation in response to the peptide chain termination codons UAG and UAA. This is Peptide chain release factor 1 from Xanthomonas oryzae pv. oryzae (strain MAFF 311018).